The chain runs to 511 residues: mRNA export factor (511 aa).

Low complexity predominate over residues methionine 1–leucine 15. Residues methionine 1 to isoleucine 244 form a disordered region. Residues isoleucine 5–aspartate 17 carry the Nuclear export signal motif. Phosphoserine; by host is present on residues serine 16 and serine 18. 2 stretches are compositionally biased toward acidic residues: residues serine 16–glutamate 26 and leucine 35–glutamate 51. An interaction with host ALYREF region spans residues valine 104–arginine 112. Residues alanine 110–arginine 138 carry the Nuclear localization signal motif. Position 114 is a phosphoserine; by host (serine 114). At arginine 138 the chain carries Dimethylated arginine; by host. The RGG-box stretch occupies residues arginine 138 to glycine 152. A compositionally biased stretch (basic residues) spans glycine 139–glycine 149. An Omega-N-methylarginine; by host modification is found at arginine 148. Arginine 150 is subject to Dimethylated arginine; by host. Residues alanine 213–proline 232 show a composition bias toward pro residues. Residues cysteine 399, histidine 478, cysteine 482, and cysteine 487 each contribute to the Zn(2+) site. A CHC2-type zinc finger spans residues cysteine 399–cysteine 487.

The protein belongs to the HHV-1 ICP27 protein family. Interacts with host RBP1; this interaction facilitates the RNA polymerase recruitment to viral transcription sites. Interacts (via the RGG box) with host ALYREF/THOC4; this interaction recruits ALYREF to viral replication compartments and probably directs viral mRNA to the TAP/NFX1 pathway. Interacts (via the RGG box) with host SRPK1; this interaction relocalizes SRPK1 to the nucleus and seems to alter its activity. Interacts with ICP4; this interaction modulates ICP4 DNA-binding activity. Interacts with host NXF1; this interaction allows efficient export of HSV-1 early and late transcripts. Post-translationally, methylated within the RGG box possibly by host PRMT1. When hypomethylated, ICP27 is exported to the cytoplasm earlier and more rapidly. In terms of processing, phosphorylated.

The protein localises to the host cytoplasm. It localises to the host nucleus. Functionally, multifunctional regulator of the expression of viral genes that contributes to the shutoff of host protein synthesis and mediates nuclear export of viral intronless mRNAs. Early in infection, this immediate early (EI) protein mediates the inhibition of cellular splicing. This results in the accumulation of unprocessed 3'end pre-mRNAs which can't be exported from the nucleus. Cellular protein synthesis is thereby shut off early after virus infection. Later in the infection, it helps recruit cellular RNA polymerase II to viral replication sites and promotes the nuclear export of viral intronless mRNAs by interacting with mRNAs and host NXF1/TAP. ICP27 binds to NUP62 which may provide facilitated viral mRNA export and may compete with some host cell transport receptors for binding and inhibit cellular nucleocytoplasmic transport pathways. Also stimulates translation of viral transcripts. Repression of host gene expression blocks the cell cycle at the G1 phase and prevents apoptosis. Seems to silence the 3' splice site of the promyelocytic leukemia (PML) intron 7a, thereby switching PML isoforms from PML-II to PML-V. This could be linked to the accelerated mRNA export induced by ICP27 which might not provide sufficient time for PML pre-mRNA to be spliced in the nucleus. This Human herpesvirus 1 (strain HFEM) (HHV-1) protein is mRNA export factor.